The primary structure comprises 166 residues: Phosphopantetheine adenylyltransferase (166 aa).

A substrate-binding site is contributed by T10. Residues 10-11 (TF) and H18 contribute to the ATP site. Substrate-binding residues include K42, L75, and R89. Residues 90–92 (GVR), E100, and 125–131 (YTYVAST) contribute to the ATP site.

This sequence belongs to the bacterial CoaD family. Homohexamer. Mg(2+) serves as cofactor.

The protein localises to the cytoplasm. It catalyses the reaction (R)-4'-phosphopantetheine + ATP + H(+) = 3'-dephospho-CoA + diphosphate. It participates in cofactor biosynthesis; coenzyme A biosynthesis; CoA from (R)-pantothenate: step 4/5. Functionally, reversibly transfers an adenylyl group from ATP to 4'-phosphopantetheine, yielding dephospho-CoA (dPCoA) and pyrophosphate. In Chlorobaculum parvum (strain DSM 263 / NCIMB 8327) (Chlorobium vibrioforme subsp. thiosulfatophilum), this protein is Phosphopantetheine adenylyltransferase.